The chain runs to 532 residues: Cocaine esterase (532 aa).

Q1 carries the pyrrolidone carboxylic acid modification. C69 and C96 form a disulfide bridge. Residue S201 is the Acyl-ester intermediate of the active site. N249 carries an N-linked (GlcNAc...) asparagine glycan. C253 and C264 form a disulfide bridge. Catalysis depends on charge relay system residues E318 and H430. A Prevents secretion from ER motif is present at residues 529–532; sequence HTEL.

It belongs to the type-B carboxylesterase/lipase family. In terms of assembly, monomer.

The protein localises to the endoplasmic reticulum lumen. The catalysed reaction is a carboxylic ester + H2O = an alcohol + a carboxylate + H(+). It catalyses the reaction cocaine + H2O = ecgonine methyl ester + benzoate + H(+). It carries out the reaction 2-(5Z,8Z,11Z,14Z-eicosatetraenoyl)-glycerol + H2O = glycerol + (5Z,8Z,11Z,14Z)-eicosatetraenoate + H(+). The enzyme catalyses prostaglandin E2 1-glyceryl ester + H2O = prostaglandin E2 + glycerol + H(+). The catalysed reaction is prostaglandin F2alpha 1-glyceryl ester + H2O = prostaglandin F2alpha + glycerol + H(+). Its function is as follows. Involved in the detoxification of xenobiotics and in the activation of ester and amide prodrugs. Converts monoacylglycerides to free fatty acids and glycerol. Hydrolyzes of 2-arachidonoylglycerol and prostaglandins. This Oryctolagus cuniculus (Rabbit) protein is Cocaine esterase (CES2).